We begin with the raw amino-acid sequence, 887 residues long: Alanine--tRNA ligase (887 aa).

Residues H565, H569, C674, and H678 each contribute to the Zn(2+) site.

It belongs to the class-II aminoacyl-tRNA synthetase family. Zn(2+) serves as cofactor.

Its subcellular location is the cytoplasm. It carries out the reaction tRNA(Ala) + L-alanine + ATP = L-alanyl-tRNA(Ala) + AMP + diphosphate. In terms of biological role, catalyzes the attachment of alanine to tRNA(Ala) in a two-step reaction: alanine is first activated by ATP to form Ala-AMP and then transferred to the acceptor end of tRNA(Ala). Also edits incorrectly charged Ser-tRNA(Ala) and Gly-tRNA(Ala) via its editing domain. In Erythrobacter litoralis (strain HTCC2594), this protein is Alanine--tRNA ligase.